Reading from the N-terminus, the 476-residue chain is Protein transport protein SEC61 subunit alpha (476 aa).

At Met1 to Leu33 the chain is on the cytoplasmic side. A helical membrane pass occupies residues Met34–Ile54. The Lumenal segment spans residues Val55–Thr76. The helical transmembrane segment at Leu77–Gly97 threads the bilayer. Over Thr98–Lys119 the chain is Cytoplasmic. A helical membrane pass occupies residues Leu120 to Gly140. At Pro141–Gly146 the chain is on the lumenal side. A helical membrane pass occupies residues Ala147–Leu167. Residues Asp168–Asn246 are Cytoplasmic-facing. Residues Leu247–Ile267 form a helical membrane-spanning segment. The Lumenal portion of the chain corresponds to Pro268 to Thr361. Residues Ala362–Val382 form a helical membrane-spanning segment. At Ser383 to Arg415 the chain is on the cytoplasmic side. Residues Ile416–Ala434 form a helical membrane-spanning segment. Residues Ser435 to Ala440 lie on the Lumenal side of the membrane. The helical transmembrane segment at Leu441–Phe458 threads the bilayer. Topologically, residues Glu459 to Gly476 are cytoplasmic.

The protein belongs to the SecY/SEC61-alpha family. Heterotrimeric complex composed of SEC61-alpha, SEC61-beta and SEC61-gamma.

The protein localises to the endoplasmic reticulum membrane. Appears to play a crucial role in the insertion of secretory and membrane polypeptides into the ER. It is required for assembly of membrane and secretory proteins and is essential for cell growth. It interacts with other membrane proteins required for protein translocation. Upon binding to SEC62/63 complex, secretory precursor polypeptides may engage SEC61 to begin membrane penetration event. A cycle of assembly and disassembly of SEC62/63 from SEC61 may govern the activity of the translocase. In Neurospora crassa (strain ATCC 24698 / 74-OR23-1A / CBS 708.71 / DSM 1257 / FGSC 987), this protein is Protein transport protein SEC61 subunit alpha (sec-61).